The chain runs to 276 residues: Shikimate dehydrogenase (NADP(+)) (276 aa).

Residues 19–21 (SKS) and threonine 66 contribute to the shikimate site. The active-site Proton acceptor is lysine 70. NADP(+) is bound at residue aspartate 82. 2 residues coordinate shikimate: asparagine 91 and aspartate 107. NADP(+)-binding positions include 133-137 (GAGGA), 157-162 (NRTRSR), and leucine 222. Tyrosine 224 serves as a coordination point for shikimate. Glycine 245 is a binding site for NADP(+).

Belongs to the shikimate dehydrogenase family. In terms of assembly, homodimer.

The enzyme catalyses shikimate + NADP(+) = 3-dehydroshikimate + NADPH + H(+). The protein operates within metabolic intermediate biosynthesis; chorismate biosynthesis; chorismate from D-erythrose 4-phosphate and phosphoenolpyruvate: step 4/7. Involved in the biosynthesis of the chorismate, which leads to the biosynthesis of aromatic amino acids. Catalyzes the reversible NADPH linked reduction of 3-dehydroshikimate (DHSA) to yield shikimate (SA). This Ruegeria sp. (strain TM1040) (Silicibacter sp.) protein is Shikimate dehydrogenase (NADP(+)).